We begin with the raw amino-acid sequence, 308 residues long: Elongation factor Ts (308 aa).

The involved in Mg(2+) ion dislocation from EF-Tu stretch occupies residues 80 to 83 (TDFV).

The protein belongs to the EF-Ts family.

The protein resides in the cytoplasm. Associates with the EF-Tu.GDP complex and induces the exchange of GDP to GTP. It remains bound to the aminoacyl-tRNA.EF-Tu.GTP complex up to the GTP hydrolysis stage on the ribosome. The protein is Elongation factor Ts of Verminephrobacter eiseniae (strain EF01-2).